The sequence spans 623 residues: Low affinity potassium transport system protein Kup (623 aa).

The next 12 helical transmembrane spans lie at 10–30 (LSAV…TSPL), 47–67 (PDVV…IVSV), 102–122 (ILVI…VITP), 138–158 (PALD…LFVI), 166–186 (VGKL…LLGL), 214–234 (VSFF…ALYA), 248–268 (WFTV…ALLL), 277–297 (PFFL…ATLA), 338–358 (IYIP…IVGF), 364–384 (LAAA…VLFC), 396–416 (FFVY…FSAN), and 420–440 (LFSG…IMTT).

This sequence belongs to the HAK/KUP transporter (TC 2.A.72) family.

Its subcellular location is the cell inner membrane. The enzyme catalyses K(+)(in) + H(+)(in) = K(+)(out) + H(+)(out). Its function is as follows. Responsible for the low-affinity transport of potassium into the cell. Likely operates as a K(+):H(+) symporter. The sequence is that of Low affinity potassium transport system protein Kup from Yersinia enterocolitica serotype O:8 / biotype 1B (strain NCTC 13174 / 8081).